Here is a 460-residue protein sequence, read N- to C-terminus: ATP synthase subunit beta (460 aa).

An ATP-binding site is contributed by 150–157; that stretch reads GGAGVGKT.

This sequence belongs to the ATPase alpha/beta chains family. In terms of assembly, F-type ATPases have 2 components, CF(1) - the catalytic core - and CF(0) - the membrane proton channel. CF(1) has five subunits: alpha(3), beta(3), gamma(1), delta(1), epsilon(1). CF(0) has three main subunits: a(1), b(2) and c(9-12). The alpha and beta chains form an alternating ring which encloses part of the gamma chain. CF(1) is attached to CF(0) by a central stalk formed by the gamma and epsilon chains, while a peripheral stalk is formed by the delta and b chains.

The protein resides in the cell inner membrane. It carries out the reaction ATP + H2O + 4 H(+)(in) = ADP + phosphate + 5 H(+)(out). Its function is as follows. Produces ATP from ADP in the presence of a proton gradient across the membrane. The catalytic sites are hosted primarily by the beta subunits. The sequence is that of ATP synthase subunit beta from Enterobacter sp. (strain 638).